The sequence spans 120 residues: uncharacterized protein (120 aa).

This sequence belongs to the HesB/IscA family.

This is an uncharacterized protein from Bacillus subtilis (strain 168).